A 784-amino-acid chain; its full sequence is Copal-8-ol diphosphate hydratase TPSSA9, chloroplastic (784 aa).

Residue arginine 240 participates in substrate binding. Mg(2+) is bound by residues aspartate 372 and aspartate 374. Residues 372–375 (DIDD) carry the DXDD motif motif. Arginine 459 is a substrate binding site.

Belongs to the terpene synthase family.

It is found in the plastid. Its subcellular location is the chloroplast. The catalysed reaction is (2E,6E,10E)-geranylgeranyl diphosphate + H2O = 8-hydroxycopalyl diphosphate. It participates in secondary metabolite biosynthesis; terpenoid biosynthesis. Its function is as follows. Involved in the biosynthesis of labdane-type diterpenoid including sclareol, a diterpene-diol that is used as fragrance and flavoring, and has anticancer effects (able to kill leukemic and colon cancer cells by apoptosis). Sclareol can also be used as synthesis precursor of ambergris substitution fragance products such as ambrox. Terpene synthase that produces 8-hydroxycopalyl diphosphate from geranylgeranyl diphosphate (GGPP). The protein is Copal-8-ol diphosphate hydratase TPSSA9, chloroplastic of Salvia sclarea (Clary sage).